Here is a 68-residue protein sequence, read N- to C-terminus: Large ribosomal subunit protein bL33c (68 aa).

The protein belongs to the bacterial ribosomal protein bL33 family.

The protein resides in the plastid. This Cuscuta exaltata (Tall dodder) protein is Large ribosomal subunit protein bL33c.